A 175-amino-acid polypeptide reads, in one-letter code: Large ribosomal subunit protein uL16 (175 aa).

It belongs to the universal ribosomal protein uL16 family.

The protein is Large ribosomal subunit protein uL16 of Caldivirga maquilingensis (strain ATCC 700844 / DSM 13496 / JCM 10307 / IC-167).